The sequence spans 728 residues: Elongation factor 2 (728 aa).

The 243-residue stretch at 19-261 (EQIRNIAIAA…MVAEHFPNPI (243 aa)) folds into the tr-type G domain. Residues 28–35 (AHVDHGKT), 94–98 (DTPGH), and 148–151 (NKVD) contribute to the GTP site. Histidine 596 carries the post-translational modification Diphthamide.

Belongs to the TRAFAC class translation factor GTPase superfamily. Classic translation factor GTPase family. EF-G/EF-2 subfamily.

It localises to the cytoplasm. In terms of biological role, catalyzes the GTP-dependent ribosomal translocation step during translation elongation. During this step, the ribosome changes from the pre-translocational (PRE) to the post-translocational (POST) state as the newly formed A-site-bound peptidyl-tRNA and P-site-bound deacylated tRNA move to the P and E sites, respectively. Catalyzes the coordinated movement of the two tRNA molecules, the mRNA and conformational changes in the ribosome. The chain is Elongation factor 2 from Halobacterium salinarum (strain ATCC 29341 / DSM 671 / R1).